We begin with the raw amino-acid sequence, 117 residues long: Large ribosomal subunit protein uL18 (117 aa).

It belongs to the universal ribosomal protein uL18 family. In terms of assembly, part of the 50S ribosomal subunit; part of the 5S rRNA/L5/L18/L25 subcomplex. Contacts the 5S and 23S rRNAs.

This is one of the proteins that bind and probably mediate the attachment of the 5S RNA into the large ribosomal subunit, where it forms part of the central protuberance. In Mannheimia succiniciproducens (strain KCTC 0769BP / MBEL55E), this protein is Large ribosomal subunit protein uL18.